Here is a 624-residue protein sequence, read N- to C-terminus: Matrilin-4 (624 aa).

The N-terminal stretch at 1-21 is a signal peptide; it reads MRGPCCWPLSLLLLFLQSWET. The VWFA 1 domain maps to 36–215; that stretch reads DLVFMIDSSR…EFGLQFQGRL (180 aa). Residue N71 is glycosylated (N-linked (GlcNAc...) asparagine). EGF-like domains lie at 217 to 257, 258 to 298, 299 to 339, and 340 to 380; these read GKDL…KNCL, ALDL…RSCR, AIDY…RSCR, and VRDF…KSCD. 12 disulfide bridges follow: C221–C232, C228–C241, C243–C256, C262–C273, C269–C282, C284–C297, C303–C314, C310–C323, C325–C338, C344–C355, C351–C364, and C366–C379. Residue N307 is glycosylated (N-linked (GlcNAc...) asparagine). A VWFA 2 domain is found at 388–563; sequence DLVLLVDGSK…STMTHLLENL (176 aa). Residues 590-623 are a coiled coil; it reads EFQGRTLGALESLTQNLARLTERLEELENQLASR.

In terms of assembly, interacts with COMP. Lung, brain, sternum, kidney and heart.

It localises to the secreted. Its function is as follows. Major component of the extracellular matrix of cartilage. The polypeptide is Matrilin-4 (Matn4) (Mus musculus (Mouse)).